A 231-amino-acid polypeptide reads, in one-letter code: uncharacterized protein (231 aa).

The next 7 membrane-spanning stretches (helical) occupy residues 26–46 (TYSW…LTAQ), 56–76 (SLRL…SMFA), 84–104 (AGAL…ALLF), 112–132 (ITAF…GFVI), 142–162 (FFLF…FVGS), 163–183 (SALS…LTAY), and 206–226 (INGA…LLNI).

It belongs to the BI1 family.

The protein localises to the cell membrane. This is an uncharacterized protein from Deinococcus radiodurans (strain ATCC 13939 / DSM 20539 / JCM 16871 / CCUG 27074 / LMG 4051 / NBRC 15346 / NCIMB 9279 / VKM B-1422 / R1).